Here is an 89-residue protein sequence, read N- to C-terminus: Neuropeptide S (89 aa).

Positions 1–23 (MIGSLKLSFVLALSLSVMHVLWC) are cleaved as a signal peptide. A propeptide spanning residues 24 to 69 (YPVLSSKVPGKPDYFLILLSSCPARLEGSDRLAFLKPILEKTSMKR) is cleaved from the precursor.

The protein localises to the secreted. Its function is as follows. May play an important anorexigenic role. Modulates arousal and anxiety as well as increases locomotor activity. Binds to its receptor NPSR1 with nanomolar affinity to increase intracellular calcium concentrations. The polypeptide is Neuropeptide S (Nps) (Mus musculus (Mouse)).